Here is a 60-residue protein sequence, read N- to C-terminus: Large ribosomal subunit protein bL32 (60 aa).

The segment at 1-43 is disordered; that stretch reads MAVQQNKKSPSKRGMHRSHDALTNPPLAIEPTTGEIHLRHHIS.

This sequence belongs to the bacterial ribosomal protein bL32 family.

The sequence is that of Large ribosomal subunit protein bL32 from Nitrosomonas europaea (strain ATCC 19718 / CIP 103999 / KCTC 2705 / NBRC 14298).